Reading from the N-terminus, the 331-residue chain is Holliday junction branch migration complex subunit RuvB (331 aa).

Positions 1–186 (MAKTMMQDRL…FGIVQRLEFY (186 aa)) are large ATPase domain (RuvB-L). Residues isoleucine 25, arginine 26, glycine 67, lysine 70, threonine 71, threonine 72, 133–135 (EDF), arginine 176, tyrosine 186, and arginine 223 each bind ATP. A Mg(2+)-binding site is contributed by threonine 71. Positions 187–257 (NIADLTTIVS…IAGSALDMLA (71 aa)) are small ATPAse domain (RuvB-S). The interval 260–331 (RRGLDHLDRR…LTQMAIDQML (72 aa)) is head domain (RuvB-H). Positions 296, 315, and 320 each coordinate DNA.

Belongs to the RuvB family. Homohexamer. Forms an RuvA(8)-RuvB(12)-Holliday junction (HJ) complex. HJ DNA is sandwiched between 2 RuvA tetramers; dsDNA enters through RuvA and exits via RuvB. An RuvB hexamer assembles on each DNA strand where it exits the tetramer. Each RuvB hexamer is contacted by two RuvA subunits (via domain III) on 2 adjacent RuvB subunits; this complex drives branch migration. In the full resolvosome a probable DNA-RuvA(4)-RuvB(12)-RuvC(2) complex forms which resolves the HJ.

The protein localises to the cytoplasm. It catalyses the reaction ATP + H2O = ADP + phosphate + H(+). Its function is as follows. The RuvA-RuvB-RuvC complex processes Holliday junction (HJ) DNA during genetic recombination and DNA repair, while the RuvA-RuvB complex plays an important role in the rescue of blocked DNA replication forks via replication fork reversal (RFR). RuvA specifically binds to HJ cruciform DNA, conferring on it an open structure. The RuvB hexamer acts as an ATP-dependent pump, pulling dsDNA into and through the RuvAB complex. RuvB forms 2 homohexamers on either side of HJ DNA bound by 1 or 2 RuvA tetramers; 4 subunits per hexamer contact DNA at a time. Coordinated motions by a converter formed by DNA-disengaged RuvB subunits stimulates ATP hydrolysis and nucleotide exchange. Immobilization of the converter enables RuvB to convert the ATP-contained energy into a lever motion, pulling 2 nucleotides of DNA out of the RuvA tetramer per ATP hydrolyzed, thus driving DNA branch migration. The RuvB motors rotate together with the DNA substrate, which together with the progressing nucleotide cycle form the mechanistic basis for DNA recombination by continuous HJ branch migration. Branch migration allows RuvC to scan DNA until it finds its consensus sequence, where it cleaves and resolves cruciform DNA. This chain is Holliday junction branch migration complex subunit RuvB, found in Psychrobacter cryohalolentis (strain ATCC BAA-1226 / DSM 17306 / VKM B-2378 / K5).